The primary structure comprises 226 residues: Phosphoglycolate phosphatase (226 aa).

The active-site Nucleophile is aspartate 9. Aspartate 9 and aspartate 11 together coordinate Mg(2+). Lysine 150 provides a ligand contact to substrate. 2 residues coordinate Mg(2+): aspartate 173 and aspartate 177.

The protein belongs to the archaeal SPP-like hydrolase family. The cofactor is Mg(2+).

The enzyme catalyses 2-phosphoglycolate + H2O = glycolate + phosphate. In terms of biological role, catalyzes the dephosphorylation of 2-phosphoglycolate. The protein is Phosphoglycolate phosphatase of Methanococcoides burtonii (strain DSM 6242 / NBRC 107633 / OCM 468 / ACE-M).